Here is a 299-residue protein sequence, read N- to C-terminus: ATP phosphoribosyltransferase (299 aa).

This sequence belongs to the ATP phosphoribosyltransferase family. Long subfamily. It depends on Mg(2+) as a cofactor.

The protein localises to the cytoplasm. It carries out the reaction 1-(5-phospho-beta-D-ribosyl)-ATP + diphosphate = 5-phospho-alpha-D-ribose 1-diphosphate + ATP. Its pathway is amino-acid biosynthesis; L-histidine biosynthesis; L-histidine from 5-phospho-alpha-D-ribose 1-diphosphate: step 1/9. Feedback inhibited by histidine. Functionally, catalyzes the condensation of ATP and 5-phosphoribose 1-diphosphate to form N'-(5'-phosphoribosyl)-ATP (PR-ATP). Has a crucial role in the pathway because the rate of histidine biosynthesis seems to be controlled primarily by regulation of HisG enzymatic activity. This chain is ATP phosphoribosyltransferase, found in Shewanella loihica (strain ATCC BAA-1088 / PV-4).